We begin with the raw amino-acid sequence, 87 residues long: uncharacterized protein (87 aa).

2 helical membrane-spanning segments follow: residues 25-45 and 53-73; these read LVAA…WLGG and YAFL…LVTF.

Its subcellular location is the cell membrane. This is an uncharacterized protein from Paracoccus denitrificans.